A 203-amino-acid chain; its full sequence is Holliday junction branch migration complex subunit RuvA (203 aa).

A domain I region spans residues 1–63 (MIVSLRGTVE…EESQTLYGFT (63 aa)). Positions 64-142 (DDASRRMFVL…GFNDGIPAAA (79 aa)) are domain II. A flexible linker region spans residues 143–150 (QPQLSIAV). A domain III region spans residues 150 to 203 (VDQAVQEQVLEALVGLGFSEKIALPVLSRVLRDSPELSKSQALRAALSELGTKN).

This sequence belongs to the RuvA family. As to quaternary structure, homotetramer. Forms an RuvA(8)-RuvB(12)-Holliday junction (HJ) complex. HJ DNA is sandwiched between 2 RuvA tetramers; dsDNA enters through RuvA and exits via RuvB. An RuvB hexamer assembles on each DNA strand where it exits the tetramer. Each RuvB hexamer is contacted by two RuvA subunits (via domain III) on 2 adjacent RuvB subunits; this complex drives branch migration. In the full resolvosome a probable DNA-RuvA(4)-RuvB(12)-RuvC(2) complex forms which resolves the HJ.

It is found in the cytoplasm. Functionally, the RuvA-RuvB-RuvC complex processes Holliday junction (HJ) DNA during genetic recombination and DNA repair, while the RuvA-RuvB complex plays an important role in the rescue of blocked DNA replication forks via replication fork reversal (RFR). RuvA specifically binds to HJ cruciform DNA, conferring on it an open structure. The RuvB hexamer acts as an ATP-dependent pump, pulling dsDNA into and through the RuvAB complex. HJ branch migration allows RuvC to scan DNA until it finds its consensus sequence, where it cleaves and resolves the cruciform DNA. The protein is Holliday junction branch migration complex subunit RuvA of Corynebacterium diphtheriae (strain ATCC 700971 / NCTC 13129 / Biotype gravis).